Here is a 281-residue protein sequence, read N- to C-terminus: Nucleotide-binding protein MADE_1004170 (281 aa).

Glycine 8–serine 15 provides a ligand contact to ATP. GTP is bound at residue aspartate 56–asparagine 59.

It belongs to the RapZ-like family.

Functionally, displays ATPase and GTPase activities. The protein is Nucleotide-binding protein MADE_1004170 of Alteromonas mediterranea (strain DSM 17117 / CIP 110805 / LMG 28347 / Deep ecotype).